The following is an 80-amino-acid chain: Exodeoxyribonuclease 7 small subunit (80 aa).

The protein belongs to the XseB family. In terms of assembly, heterooligomer composed of large and small subunits.

It is found in the cytoplasm. It catalyses the reaction Exonucleolytic cleavage in either 5'- to 3'- or 3'- to 5'-direction to yield nucleoside 5'-phosphates.. Its function is as follows. Bidirectionally degrades single-stranded DNA into large acid-insoluble oligonucleotides, which are then degraded further into small acid-soluble oligonucleotides. The sequence is that of Exodeoxyribonuclease 7 small subunit from Vibrio parahaemolyticus serotype O3:K6 (strain RIMD 2210633).